A 131-amino-acid chain; its full sequence is Small ribosomal subunit protein uS9 (131 aa).

The protein belongs to the universal ribosomal protein uS9 family.

The sequence is that of Small ribosomal subunit protein uS9 from Actinobacillus pleuropneumoniae serotype 7 (strain AP76).